We begin with the raw amino-acid sequence, 96 residues long: Large ribosomal subunit protein uL23 (96 aa).

This sequence belongs to the universal ribosomal protein uL23 family. As to quaternary structure, part of the 50S ribosomal subunit. Contacts protein L29, and trigger factor when it is bound to the ribosome.

Functionally, one of the early assembly proteins it binds 23S rRNA. One of the proteins that surrounds the polypeptide exit tunnel on the outside of the ribosome. Forms the main docking site for trigger factor binding to the ribosome. This chain is Large ribosomal subunit protein uL23, found in Aster yellows witches'-broom phytoplasma (strain AYWB).